Consider the following 365-residue polypeptide: Histidinol-phosphate aminotransferase (365 aa).

Lys-227 carries the N6-(pyridoxal phosphate)lysine modification.

Belongs to the class-II pyridoxal-phosphate-dependent aminotransferase family. Histidinol-phosphate aminotransferase subfamily. As to quaternary structure, homodimer. The cofactor is pyridoxal 5'-phosphate.

It carries out the reaction L-histidinol phosphate + 2-oxoglutarate = 3-(imidazol-4-yl)-2-oxopropyl phosphate + L-glutamate. Its pathway is amino-acid biosynthesis; L-histidine biosynthesis; L-histidine from 5-phospho-alpha-D-ribose 1-diphosphate: step 7/9. The chain is Histidinol-phosphate aminotransferase from Campylobacter concisus (strain 13826).